Reading from the N-terminus, the 604-residue chain is Nuclear cap-binding protein subunit 3 (604 aa).

A disordered region spans residues 1–36 (MAAVRGLRISVKAEATATTAEPRGPEPEPMEVEEGE). The RNA recognition motif (RRM) domain stretch occupies residues 116-177 (DTIYICGVDE…MSSFPDQEKP (62 aa)). The short motif at 145-148 (WLDD) is the WLDD motif; essential for 7-methylguanosine-containing mRNA cap binding element. Disordered regions lie at residues 168 to 219 (MSSF…DIEL), 319 to 383 (KHRH…DSDE), and 457 to 604 (QNNN…DTES). A compositionally biased stretch (basic and acidic residues) spans 173–198 (DQEKPKGGENNEEKTAEKNKKEKQEE). Acidic residues-rich tracts occupy residues 199-219 (STDDETEEGEVEDENPSDIEL) and 331-349 (EPIEEEEEEEEVQDMDEDD). Residues 350–370 (RVVVEYRDDLQPFKQSRDRGA) show a composition bias toward basic and acidic residues. The span at 458-469 (NNNGLRQPNSIV) shows a compositional bias: polar residues. Basic and acidic residues-rich tracts occupy residues 495-505 (PRREPISDVHS), 539-548 (TQEKTSDKPE), and 569-582 (IKEKGESRQKKSRL). Positions 595-604 (ESSSGSDTES) are enriched in low complexity.

The protein belongs to the NCBP3 family. As to quaternary structure, component of an alternative cap-binding complex (CBC) composed of NCBP1/CBP80 and NCBP3.

It localises to the nucleus. Its subcellular location is the cytoplasm. In terms of biological role, associates with NCBP1/CBP80 to form an alternative cap-binding complex (CBC) which plays a key role in mRNA export. NCBP3 serves as adapter protein linking the capped RNAs (m7GpppG-capped RNA) to NCBP1/CBP80. Unlike the conventional CBC with NCBP2 which binds both small nuclear RNA (snRNA) and messenger (mRNA) and is involved in their export from the nucleus, the alternative CBC with NCBP3 does not bind snRNA and associates only with mRNA thereby playing a role in only mRNA export. In Gallus gallus (Chicken), this protein is Nuclear cap-binding protein subunit 3.